Reading from the N-terminus, the 477-residue chain is Enolase 1, chloroplastic (477 aa).

Residues 1-41 constitute a chloroplast transit peptide; it reads MALTTKPHHLQRSFLSPSRVSGERYLESAPSCLRFRRSGVQ. Residues histidine 203 and glutamate 212 each contribute to the substrate site. The active-site Proton donor is glutamate 255. Mg(2+) contacts are provided by aspartate 290, glutamate 340, and aspartate 365. Positions 340 and 365 each coordinate substrate. The Proton acceptor role is filled by lysine 390. Substrate contacts are provided by residues 417 to 420 and lysine 441; that span reads SHRS. A Phosphoserine modification is found at serine 476.

Belongs to the enolase family. Mg(2+) serves as cofactor. In terms of tissue distribution, highly expressed in young roots, young siliques, and shoot apex. Lowly expressed in young leaves, stems and cotyledons.

It is found in the plastid. The protein localises to the chloroplast. The catalysed reaction is (2R)-2-phosphoglycerate = phosphoenolpyruvate + H2O. It participates in carbohydrate degradation; glycolysis; pyruvate from D-glyceraldehyde 3-phosphate: step 4/5. This is Enolase 1, chloroplastic (ENO1) from Arabidopsis thaliana (Mouse-ear cress).